Here is a 350-residue protein sequence, read N- to C-terminus: Phosphoribosylformylglycinamidine cyclo-ligase (350 aa).

Belongs to the AIR synthase family.

It is found in the cytoplasm. It catalyses the reaction 2-formamido-N(1)-(5-O-phospho-beta-D-ribosyl)acetamidine + ATP = 5-amino-1-(5-phospho-beta-D-ribosyl)imidazole + ADP + phosphate + H(+). It functions in the pathway purine metabolism; IMP biosynthesis via de novo pathway; 5-amino-1-(5-phospho-D-ribosyl)imidazole from N(2)-formyl-N(1)-(5-phospho-D-ribosyl)glycinamide: step 2/2. This chain is Phosphoribosylformylglycinamidine cyclo-ligase, found in Cupriavidus metallidurans (strain ATCC 43123 / DSM 2839 / NBRC 102507 / CH34) (Ralstonia metallidurans).